The chain runs to 607 residues: Elongation factor 4 (607 aa).

Positions 11–193 (SKIRNFSIIA…QIVEKVPAPT (183 aa)) constitute a tr-type G domain. Residues 23-28 (DHGKST) and 140-143 (NKID) contribute to the GTP site.

It belongs to the TRAFAC class translation factor GTPase superfamily. Classic translation factor GTPase family. LepA subfamily.

The protein localises to the cell membrane. The catalysed reaction is GTP + H2O = GDP + phosphate + H(+). Functionally, required for accurate and efficient protein synthesis under certain stress conditions. May act as a fidelity factor of the translation reaction, by catalyzing a one-codon backward translocation of tRNAs on improperly translocated ribosomes. Back-translocation proceeds from a post-translocation (POST) complex to a pre-translocation (PRE) complex, thus giving elongation factor G a second chance to translocate the tRNAs correctly. Binds to ribosomes in a GTP-dependent manner. This chain is Elongation factor 4, found in Bacillus cereus (strain AH820).